The following is a 167-amino-acid chain: Regulator of sigma D (167 aa).

The protein belongs to the Rsd/AlgQ family. In terms of assembly, interacts with RpoD.

The protein resides in the cytoplasm. Functionally, binds RpoD and negatively regulates RpoD-mediated transcription activation by preventing the interaction between the primary sigma factor RpoD with the catalytic core of the RNA polymerase and with promoter DNA. May be involved in replacement of the RNA polymerase sigma subunit from RpoD to RpoS during the transition from exponential growth to the stationary phase. This chain is Regulator of sigma D, found in Yersinia enterocolitica serotype O:8 / biotype 1B (strain NCTC 13174 / 8081).